Reading from the N-terminus, the 172-residue chain is UBA-like domain-containing protein 2 (172 aa).

The segment covering 118–130 (PPNQQPVWLPPSS) has biased composition (pro residues). Residues 118-172 (PPNQQPVWLPPSSPTGHHTLHHHHHHMHPPPSWPPVSQPANGPQTPVISALHGQR) form a disordered region. Positions 135-145 (HTLHHHHHHMH) are enriched in basic residues.

Belongs to the UBALD family.

The polypeptide is UBA-like domain-containing protein 2 (ubald2) (Danio rerio (Zebrafish)).